The sequence spans 1311 residues: Nephrocystin-3 (1311 aa).

Positions 81 to 183 (SKNNEIASMQ…LQRLQAQGIQ (103 aa)) form a coiled coil. 9 TPR repeats span residues 889-923 (LSYW…EEKM), 927-960 (ADLY…RETA), 969-1002 (AQSL…SENA), 1011-1044 (AREL…RQKS), 1077-1110 (ARTL…RERV), 1119-1152 (AQSI…RRRA), 1161-1194 (AYTV…RQKS), 1203-1236 (ATAL…YEDS), and 1245-1278 (GETL…KETE).

The protein resides in the cell projection. It localises to the cilium. Required for normal ciliary development and function. Inhibits disheveled-1-induced canonical Wnt-signaling activity and may also play a role in the control of non-canonical Wnt signaling that regulates planar cell polarity. Probably acts as a molecular switch between different Wnt signaling pathways. Required for proper convergent extension cell movements. The protein is Nephrocystin-3 (nphp3) of Xenopus tropicalis (Western clawed frog).